The following is a 320-amino-acid chain: Transcription termination/antitermination protein NusG (320 aa).

Belongs to the NusG family.

In terms of biological role, participates in transcription elongation, termination and antitermination. The chain is Transcription termination/antitermination protein NusG from Mycoplasma pneumoniae (strain ATCC 29342 / M129 / Subtype 1) (Mycoplasmoides pneumoniae).